The primary structure comprises 434 residues: ATP-dependent protease ATPase subunit HslU (434 aa).

ATP-binding positions include V18, 60 to 65, D247, E312, and R384; that span reads GVGKTE.

This sequence belongs to the ClpX chaperone family. HslU subfamily. As to quaternary structure, a double ring-shaped homohexamer of HslV is capped on each side by a ring-shaped HslU homohexamer. The assembly of the HslU/HslV complex is dependent on binding of ATP.

Its subcellular location is the cytoplasm. Its function is as follows. ATPase subunit of a proteasome-like degradation complex; this subunit has chaperone activity. The binding of ATP and its subsequent hydrolysis by HslU are essential for unfolding of protein substrates subsequently hydrolyzed by HslV. HslU recognizes the N-terminal part of its protein substrates and unfolds these before they are guided to HslV for hydrolysis. In Bradyrhizobium sp. (strain BTAi1 / ATCC BAA-1182), this protein is ATP-dependent protease ATPase subunit HslU.